Reading from the N-terminus, the 97-residue chain is Large ribosomal subunit protein eL37 (97 aa).

Lys-10 is subject to N6-acetyllysine. Zn(2+) is bound by residues Cys-19, Cys-22, Cys-34, and Cys-37. The C4-type zinc finger occupies 19-37; the sequence is CRRCGSKAYHLQKSTCGKC. 2 positions are modified to phosphoserine: Ser-96 and Ser-97.

It belongs to the eukaryotic ribosomal protein eL37 family. In terms of assembly, component of the large ribosomal subunit.

The protein resides in the cytoplasm. Its function is as follows. Component of the large ribosomal subunit. The ribosome is a large ribonucleoprotein complex responsible for the synthesis of proteins in the cell. The protein is Large ribosomal subunit protein eL37 (RPL37) of Bos taurus (Bovine).